Consider the following 703-residue polypeptide: MAKREYPLERTRNIGIMAHIDAGKTTTTERILYYTGKIHKIGETHDGASQMDFMEQEKERGITIQSAATTAVWHGFFDQFAKTPYRVNIIDTPGHVDFTIEVERALRVLDGAVAVLDGAAGVEPQTETVWRQATTYDVPRIVFVNKMDKLGADFQMSVDSIHERLQVNAEAIQWPIGAEDDFEAVIDLITQEAYYPEDDLGEKWAPREIPEELKELAEEKRNTLIEAVADVDDDLMEKYLEGEDISIEELKAAIRRATLALQFYPVLAGSAYKDKGVQMMLDAVVDYLPGPLDVKPYIANDPKTDEEIDLIADDSKPFAALAFKIMTDPFVGRLTFMRVYTGTLKSGSYVQNTSSDTRERVGRLLQMHATSRTEIEEVFSGDIAAAIGLKNTTTGDSLTDVSHQLILESMEFPEPVIELAIEPKTKADQDKLSNAIQKLAEEDPSFRATTNQETGQTLIAGMGELQLDIMVDRMRREFNVEATVGAPQVAYREAFTKTVQARGFFKRQSGGKGQYGDVYIEFAPNEEGAGFEFEDAIVGGVVPREYIPSVEAGLKDALNAGPLAGFPLVDLKAKLYDGSYHDVDSSEAAFKIAASLALKEAAKTAGAVILEPIMAVDIVAPEDNLGDVMGHVSARRGMIEGQESRGPVLAVKAKVPLSEMFGYATTLRSATQGRGTFQMVFDHYEAVPKNIQEEIIKTNGQED.

One can recognise a tr-type G domain in the interval 9–292 (ERTRNIGIMA…AVVDYLPGPL (284 aa)). GTP is bound by residues 18-25 (AHIDAGKT), 91-95 (DTPGH), and 145-148 (NKMD).

It belongs to the TRAFAC class translation factor GTPase superfamily. Classic translation factor GTPase family. EF-G/EF-2 subfamily.

It is found in the cytoplasm. Functionally, catalyzes the GTP-dependent ribosomal translocation step during translation elongation. During this step, the ribosome changes from the pre-translocational (PRE) to the post-translocational (POST) state as the newly formed A-site-bound peptidyl-tRNA and P-site-bound deacylated tRNA move to the P and E sites, respectively. Catalyzes the coordinated movement of the two tRNA molecules, the mRNA and conformational changes in the ribosome. The chain is Elongation factor G from Leuconostoc mesenteroides subsp. mesenteroides (strain ATCC 8293 / DSM 20343 / BCRC 11652 / CCM 1803 / JCM 6124 / NCDO 523 / NBRC 100496 / NCIMB 8023 / NCTC 12954 / NRRL B-1118 / 37Y).